A 702-amino-acid polypeptide reads, in one-letter code: 1,4-alpha-glucan-branching enzyme (702 aa).

A2 is modified (N-acetylalanine). Residues 62–63 (NE) and 91–93 (WAP) each bind substrate. A (1,4-alpha-D-glucosyl)n-binding site is contributed by W107. 118 to 121 (DYGK) is a binding site for substrate. K143 serves as a coordination point for (1,4-alpha-D-glucosyl)n. Y173 carries the post-translational modification Phosphotyrosine. Residue 333-336 (EILR) participates in substrate binding. Catalysis depends on D357, which acts as the Nucleophile. E412 serves as the catalytic Proton donor.

The protein belongs to the glycosyl hydrolase 13 family. GlgB subfamily. Monomer.

It catalyses the reaction Transfers a segment of a (1-&gt;4)-alpha-D-glucan chain to a primary hydroxy group in a similar glucan chain.. It functions in the pathway glycan biosynthesis; glycogen biosynthesis. Glycogen-branching enzyme participates in the glycogen biosynthetic process along with glycogenin and glycogen synthase. Generates alpha-1,6-glucosidic branches from alpha-1,4-linked glucose chains, to increase solubility of the glycogen polymer. The chain is 1,4-alpha-glucan-branching enzyme (GBE1) from Homo sapiens (Human).